Reading from the N-terminus, the 228-residue chain is Cytidylate kinase (228 aa).

10–18 (GPSGSGKGT) provides a ligand contact to ATP.

This sequence belongs to the cytidylate kinase family. Type 1 subfamily.

It is found in the cytoplasm. The enzyme catalyses CMP + ATP = CDP + ADP. It catalyses the reaction dCMP + ATP = dCDP + ADP. The polypeptide is Cytidylate kinase (Acinetobacter baumannii (strain SDF)).